Here is a 240-residue protein sequence, read N- to C-terminus: Uridylate kinase (240 aa).

Residue 13–16 participates in ATP binding; the sequence is KFSG. Glycine 55 is a UMP binding site. Residues glycine 56 and arginine 60 each coordinate ATP. UMP-binding positions include aspartate 76 and 137-144; that span reads TGNPFFTT. ATP contacts are provided by threonine 164, tyrosine 170, and aspartate 173.

It belongs to the UMP kinase family. In terms of assembly, homohexamer.

It localises to the cytoplasm. The enzyme catalyses UMP + ATP = UDP + ADP. It functions in the pathway pyrimidine metabolism; CTP biosynthesis via de novo pathway; UDP from UMP (UMPK route): step 1/1. Its activity is regulated as follows. Inhibited by UTP. Its function is as follows. Catalyzes the reversible phosphorylation of UMP to UDP. This chain is Uridylate kinase, found in Helicobacter pylori (strain HPAG1).